The primary structure comprises 372 residues: N-methyl-L-tryptophan oxidase (372 aa).

4-34 (DLIIIGSGSVGAAAGYYATRAGLKVLMTDAH) contacts FAD. An S-8alpha-FAD cysteine modification is found at Cys307.

This sequence belongs to the MSOX/MTOX family. MTOX subfamily. In terms of assembly, monomer. It depends on FAD as a cofactor.

It carries out the reaction N(alpha)-methyl-L-tryptophan + O2 + H2O = L-tryptophan + formaldehyde + H2O2. Functionally, catalyzes the oxidative demethylation of N-methyl-L-tryptophan. This is N-methyl-L-tryptophan oxidase from Salmonella agona (strain SL483).